We begin with the raw amino-acid sequence, 1057 residues long: Histone deacetylase complex subunit SAP130 (1057 aa).

The segment at M1–P69 is disordered. A compositionally biased stretch (polar residues) spans P14–S28. Over residues E41–V54 the composition is skewed to basic and acidic residues. At R206 the chain carries Omega-N-methylarginine. Phosphothreonine is present on T329. Phosphoserine is present on residues S416 and S439. 2 disordered regions span residues T619–V695 and P718–A740. The span at T620 to R641 shows a compositional bias: polar residues. K794 participates in a covalent cross-link: Glycyl lysine isopeptide (Lys-Gly) (interchain with G-Cter in SUMO2). Residues N827–K873 form a disordered region. The interval P845–V1057 is interactions with SIN3A and HDAC1. S864 carries the phosphoserine modification. The residue at position 865 (T865) is a Phosphothreonine. Glycyl lysine isopeptide (Lys-Gly) (interchain with G-Cter in SUMO2) cross-links involve residues K873 and K878. Position 884 is a phosphoserine (S884).

Belongs to the SAP130 family. In terms of assembly, component of a mSin3A corepressor complex that contains SIN3A, SAP130, SUDS3/SAP45, ARID4B/SAP180, HDAC1 and HDAC2. Interacts (released by dead or dying cells) with CLEC4E. Acetylated. In terms of processing, sumoylated with SUMO1.

It localises to the nucleus. Acts as a transcriptional repressor. May function in the assembly and/or enzymatic activity of the mSin3A corepressor complex or in mediating interactions between the complex and other regulatory complexes. This is Histone deacetylase complex subunit SAP130 (Sap130) from Mus musculus (Mouse).